The chain runs to 246 residues: Sulfate transporter CysZ (246 aa).

Helical transmembrane passes span 24-44, 69-89, 148-168, and 214-234; these read LFVLIPLTLNLLVFALLIGFA, IVWPLFVLLVLVIVFFTFTMV, LLVLSFVPGVNLIATPLWILF, and LLIPLVNLVMMPAAVAGATLF.

This sequence belongs to the CysZ family.

Its subcellular location is the cell inner membrane. In terms of biological role, high affinity, high specificity proton-dependent sulfate transporter, which mediates sulfate uptake. Provides the sulfur source for the cysteine synthesis pathway. This is Sulfate transporter CysZ from Pseudomonas aeruginosa (strain LESB58).